A 668-amino-acid polypeptide reads, in one-letter code: Potassium voltage-gated channel subfamily KQT member 1 (668 aa).

Topologically, residues 1–119 (MDTASSPPSA…YNFLERPTGW (119 aa)) are cytoplasmic. At serine 27 the chain carries Phosphoserine; by PKA. A helical transmembrane segment spans residues 120-141 (KCFVYHFTVFLIVLVCLIFSVL). Residues 142–152 (STIEQYAALAT) lie on the Extracellular side of the membrane. Residues 153–175 (GTLFWMEIVLVVFFGTEYVVRLW) traverse the membrane as a helical segment. The Cytoplasmic segment spans residues 176–191 (SAGCRSKYVGIWGRLR). A helical transmembrane segment spans residues 192 to 217 (FARKPISIIDLIVVVASMVVLCVGSK). The Extracellular portion of the chain corresponds to 218–225 (GQVFATSA). Residues 226 to 241 (IRGIRFLQILRMLHVD) traverse the membrane as a helical; Voltage-sensor segment. The interaction with KCNE3 stretch occupies residues 237 to 245 (MLHVDRQGG). Over 242 to 259 (RQGGTWRLLGSVVFIHRQ) the chain is Cytoplasmic. Glutamine 243 contributes to the a 1,2-diacyl-sn-glycero-3-phospho-(1D-myo-inositol-4,5-bisphosphate) binding site. The helical transmembrane segment at 260-282 (ELITTLYIGFLGLIFSSYFVYLA) threads the bilayer. Residues 283-298 (EKDAVNESGRIEFGSY) lie on the Extracellular side of the membrane. A glycan (N-linked (GlcNAc...) asparagine) is linked at asparagine 288. The segment at residues 299–319 (ADALWWGVVTVTTIGYGDKVP) is an intramembrane region (pore-forming). The Extracellular segment spans residues 320 to 321 (QT). A helical membrane pass occupies residues 322–347 (WVGKTIASCFSVFAISFFALPAGILG). The Cytoplasmic portion of the chain corresponds to 348 to 668 (SGFALKVQQK…VPQTGPDEGS (321 aa)). The segment at 369-381 (AAASLIQTAWRCY) is interaction with CALM. Serine 406 and serine 408 each carry phosphoserine. The tract at residues 514–528 (KVIRRMQYFVAKKKF) is interaction with CALM; calcium-dependent. The tract at residues 534–571 (PYDVRDVIEQYSQGHLNLMVRIKELQRRLDQSIGKPSL) is interaction with KCNE1 C-terminus. A coiled-coil region spans residues 584 to 620 (SNTIGARLNRVEDKVTQLDQRLVIITDMLHQLLSMQQ). Residues 587–615 (IGARLNRVEDKVTQLDQRLVIITDMLHQL) are interaction with AKAP9. The C-terminal assembly domain (tetramerization) stretch occupies residues 588–619 (GARLNRVEDKVTQLDQRLVIITDMLHQLLSMQ).

This sequence belongs to the potassium channel family. KQT (TC 1.A.1.15) subfamily. Kv7.1/KCNQ1 sub-subfamily. Tetramer. Heterotetramer with KCNE1; form the native cardiac channel I(Ks) which increases the amplitude and slows down the activation kinetics of outward potassium current and targets to the membrane raft. Interacts (via C-terminus) with CALM; forms a heterooctameric structure (with 4:4 KCNQ1:CALM stoichiometry) in a calcium-independent manner. Interacts with AKAP9; targets protein kinase A (PKA) catalytic and regulatory subunits and protein phosphatase 1 (PP1) to the KCNQ1-KCNE1 complex, allowing PKA-mediated phosphorylation and increase of delayed rectifier potassium channel activity. Interacts with KCNE2; form an heterooligomer complex that targets to the membrane raft and leading to currents with an apparently instantaneous activation, a rapid deactivation process and a linear current-voltage relationship and decreases the amplitude of the outward current. Interacts with AP2M1; mediates estrogen-induced internalization via clathrin-coated vesicles. Interacts with NEDD4L; promotes internalization and decreases I(Ks) currents. Interacts with USP2; counteracts the NEDD4L-specific down-regulation of I(Ks) and restore plasma membrane localization. Heterotetramer with KCNQ5; has a voltage-gated potassium channel activity. Interacts with KCNE3; four KCNE3 molecules are bound to one KCNQ1 tetramer (4:4 KCNQ1:KCNE3 stoichiometry); alters membrane raft localization; affects KCNQ1 structure and gating properties. Interacts with KCNE4; impairs KCNQ1 localization in lipid rafts and inhibits voltage-gated potassium channel activity. Interacts with KCNE5; impairs KCNQ1 localization in lipid rafts and only conducts current upon strong and continued depolarization. Interacts with SLC5A3; forms coregulatory channel-transporter complexes that modulate Na(+)-coupled myo-inositol influx through the transporter. In terms of processing, phosphorylation at Ser-27 by PKA; increases delayed rectifier potassium channel activity of the KCNQ1-KCNE1 complex through a macromolecular complex that includes PKA, PP1, and the targeting protein AKAP9. Post-translationally, ubiquitinated by NEDD4L; promotes internalization. The ubiquitinylated form is internalized through a clathrin-mediated endocytosis by interacting with AP2M1 and is recycled back to the cell membrane via RAB4A and RAB11A. Deubiquitinated by USP2; counteracts the NEDD4L-specific down-regulation of I(Ks) and restores the membrane localization. As to expression, expressed in heart, kidney and salivary glands. Detected in the cochlea. Almost undetectable in brain, skeletal muscle and liver. Widely expressed in embryonic and neonatal tissues. Expressed in choroid plexus epithelium (at protein level).

The protein resides in the cell membrane. It localises to the cytoplasmic vesicle membrane. It is found in the early endosome. Its subcellular location is the membrane raft. The protein localises to the endoplasmic reticulum. The protein resides in the basolateral cell membrane. It localises to the apical cell membrane. It carries out the reaction K(+)(in) = K(+)(out). PIP2 molecule is essential to activate KCNQ channels by inducing the coupling of the voltage-sensing domain (VSD) and the pore-forming domain (PD). Upon channel activation, PIP2 disrupts the VSD-calmodulin/CALM interactions, causing the release of CALM from the VSD which triggers the opening of the gate. Calcium potentiates KCNQ1 channel current through calcium-bound CALM. Calcium-bound CALM competes with PIP2 to stabilize the channel open state. Functionally, pore-forming subunit of the voltage-gated potassium (Kv) channel involved in the regulation of cardiomyocyte excitability and important in normal development and functions of myocardium, inner ear, stomach and colon. Associates with KCNE beta subunits that modulates current kinetics. Induces a voltage-dependent by rapidly activating and slowly deactivating potassium-selective outward current. Also promotes a delayed voltage activated potassium current showing outward rectification characteristic. During beta-adrenergic receptor stimulation participates in cardiac increases the amplitude and slows down the activation kinetics of outward potassium current I(Ks). Muscarinic agonist oxotremorine-M strongly suppresses KCNQ1/KCNE1 current. When associated with KCNE3, forms the potassium channel that is important for cyclic AMP-stimulated intestinal secretion of chloride ions. This interaction with KCNE3 is reduced by 17beta-estradiol, resulting in the reduction of currents. During conditions of increased substrate load, maintains the driving force for proximal tubular and intestinal sodium ions absorption, gastric acid secretion, and cAMP-induced jejunal chloride ions secretion. Allows the provision of potassium ions to the luminal membrane of the secretory canaliculus in the resting state as well as during stimulated acid secretion. When associated with KCNE2, forms a heterooligomer complex leading to currents with an apparently instantaneous activation, a rapid deactivation process and a linear current-voltage relationship and decreases the amplitude of the outward current. When associated with KCNE4, inhibits voltage-gated potassium channel activity. When associated with KCNE5, this complex only conducts current upon strong and continued depolarization. Also forms a heterotetramer with KCNQ5; has a voltage-gated potassium channel activity. Binds with phosphatidylinositol 4,5-bisphosphate. KCNQ1-KCNE2 channel associates with Na(+)-coupled myo-inositol symporter in the apical membrane of choroid plexus epithelium and regulates the myo-inositol gradient between blood and cerebrospinal fluid with an impact on neuron excitability. In Mus musculus (Mouse), this protein is Potassium voltage-gated channel subfamily KQT member 1.